We begin with the raw amino-acid sequence, 314 residues long: tRNA dimethylallyltransferase (314 aa).

6–13 (GPTAVGKT) is an ATP binding site. 8–13 (TAVGKT) serves as a coordination point for substrate. An interaction with substrate tRNA region spans residues 31 to 34 (DSRQ).

This sequence belongs to the IPP transferase family. As to quaternary structure, monomer. Mg(2+) serves as cofactor.

It carries out the reaction adenosine(37) in tRNA + dimethylallyl diphosphate = N(6)-dimethylallyladenosine(37) in tRNA + diphosphate. Functionally, catalyzes the transfer of a dimethylallyl group onto the adenine at position 37 in tRNAs that read codons beginning with uridine, leading to the formation of N6-(dimethylallyl)adenosine (i(6)A). The protein is tRNA dimethylallyltransferase of Pseudothermotoga lettingae (strain ATCC BAA-301 / DSM 14385 / NBRC 107922 / TMO) (Thermotoga lettingae).